Consider the following 556-residue polypeptide: Olefin beta-lactone synthetase (556 aa).

ATP is bound by residues 187-195, 321-326, D430, and R445; these read TSGSTGVPK and TPYGAT.

It belongs to the ATP-dependent AMP-binding enzyme family. Monomer. Forms a complex with OleB and OleD.

Its subcellular location is the cytoplasm. It carries out the reaction a (2R,3S)-2-alkyl-3-hydroxyalkanoate + ATP = a cis-3-alkyl-4-alkyloxetan-2-one + AMP + diphosphate. Functionally, involved in olefin biosynthesis. Catalyzes the conversion of 2-alkyl-3-hydroxyalkanoic acids to beta-lactones in the presence of ATP. This Xanthomonas campestris pv. campestris (strain ATCC 33913 / DSM 3586 / NCPPB 528 / LMG 568 / P 25) protein is Olefin beta-lactone synthetase.